The chain runs to 367 residues: Peptidyl-prolyl cis-trans isomerase D (367 aa).

A PPIase cyclophilin-type domain is found at 7–171; that stretch reads FFEVAIGGKT…QPVTIVDCGE (165 aa). TPR repeat units lie at residues 213–246, 264–297, and 302–335; these read IEKL…LEDY, ISCY…ETVA, and AKAL…EPAD.

This sequence belongs to the cyclophilin-type PPIase family. PPIase D subfamily.

It is found in the cytoplasm. The catalysed reaction is [protein]-peptidylproline (omega=180) = [protein]-peptidylproline (omega=0). Its function is as follows. PPIases accelerate the folding of proteins. It catalyzes the cis-trans isomerization of proline imidic peptide bonds in oligopeptides. The sequence is that of Peptidyl-prolyl cis-trans isomerase D (CPR6) from Yarrowia lipolytica (strain CLIB 122 / E 150) (Yeast).